A 206-amino-acid polypeptide reads, in one-letter code: Ribosomal RNA small subunit methyltransferase G (206 aa).

Residues G74, L79, 125-126 (VE), and R140 contribute to the S-adenosyl-L-methionine site.

Belongs to the methyltransferase superfamily. RNA methyltransferase RsmG family.

It is found in the cytoplasm. The catalysed reaction is guanosine(527) in 16S rRNA + S-adenosyl-L-methionine = N(7)-methylguanosine(527) in 16S rRNA + S-adenosyl-L-homocysteine. Specifically methylates the N7 position of guanine in position 527 of 16S rRNA. The chain is Ribosomal RNA small subunit methyltransferase G from Shewanella oneidensis (strain ATCC 700550 / JCM 31522 / CIP 106686 / LMG 19005 / NCIMB 14063 / MR-1).